Here is a 543-residue protein sequence, read N- to C-terminus: Ipecoside beta-D-glucosidase IpeGLU1 (543 aa).

Residues Gln36, His140, 185-186, Tyr350, Glu422, Trp471, and Phe487 each bind a beta-D-glucoside; that span reads NE. Catalysis depends on Glu186, which acts as the Proton donor. The Nucleophile role is filled by Glu422.

The protein belongs to the glycosyl hydrolase 1 family. Expressed in roots.

It localises to the cytoplasm. The protein localises to the cytosol. The enzyme catalyses deacetylipecoside + H2O = deacetylipecoside aglycone + D-glucose. It catalyses the reaction deacetylisoipecoside + H2O = deacetylisoipecoside aglycone + D-glucose. The catalysed reaction is 6-O-methyldeacetylipecoside + H2O = 6-O-methyldeacetylipecoside aglycone + D-glucose. It carries out the reaction 6-O-methyldeacetylisoipecoside + H2O = 6-O-methyldeacetylisoipecoside aglycone + D-glucose. The enzyme catalyses ipecoside + H2O = ipecoside aglycone + D-glucose. It catalyses the reaction 3alpha(S)-strictosidine + H2O = strictosidine aglycone + D-glucose. The protein operates within alkaloid biosynthesis. With respect to regulation, inhibited by Cu(2+), Fe(2+) and Zn(2+). In terms of biological role, beta-glucosidase involved in the biosynthesis of ipecac and benzylisoquinoline monoterpenoid-isoquinoline alkaloids natural products, starting by the condensation of dopamine and secologanin, and including emetine and cephaeline, drugs used both as anti-protozoal (e.g. treatment of ameobiasis) and as emetic agents. In response to pathogen and herbivore attack, triggers the release of toxic ipecoside aglycon to trigger defense responses. Catalyzes deglucosylation both on (1S)-diastereomer and (1R)-diastereomer substrates, including ipecoside, the main alkaloidal glucoside. Also active on N-deacetylisoipecoside, 6-O-methyl-N-deacetylisoipecoside, 6-O-methyl-N-deacetylipecoside and N-deacetylipecoside. In Carapichea ipecacuanha (Ipecac), this protein is Ipecoside beta-D-glucosidase IpeGLU1.